A 400-amino-acid polypeptide reads, in one-letter code: uncharacterized protein (400 aa).

The protein belongs to the mimivirus R640 family.

Its subcellular location is the virion. This is an uncharacterized protein from Acanthamoeba polyphaga (Amoeba).